The chain runs to 162 residues: Protein SLM4 (162 aa).

The helical transmembrane segment at 127–144 threads the bilayer; that stretch reads LLLLFIAEGSFPYGLLVI.

As to quaternary structure, component of the GSE complex composed of GTR1, GTR2, SLM4, MEH1 and LTV1. Component of the EGO complex, at least composed of GTR2, SLM4 and MEH1.

The protein localises to the vacuole membrane. Component of the GSE complex, a GTPase complex required for intracellular sorting of GAP1 out of the endosome. Component of the EGO complex, a complex involved in the regulation of microautophagy. The sequence is that of Protein SLM4 (SLM4) from Saccharomyces cerevisiae (strain ATCC 204508 / S288c) (Baker's yeast).